Reading from the N-terminus, the 78-residue chain is Large ribosomal subunit protein bL31 (78 aa).

This sequence belongs to the bacterial ribosomal protein bL31 family. Type A subfamily. Part of the 50S ribosomal subunit.

Functionally, binds the 23S rRNA. In Rickettsia typhi (strain ATCC VR-144 / Wilmington), this protein is Large ribosomal subunit protein bL31 (rpmE).